Consider the following 493-residue polypeptide: Vacuolar-processing enzyme (493 aa).

The N-terminal stretch at 1–19 (MGSSQLSTLLFFTIVVTFL) is a signal peptide. N-linked (GlcNAc...) asparagine glycosylation is present at Asn147. Residue His174 is part of the active site. Residue Cys216 is the Nucleophile of the active site. Cys249 and Cys263 are oxidised to a cystine. N-linked (GlcNAc...) asparagine glycans are attached at residues Asn295 and Asn331. 2 disulfides stabilise this stretch: Cys429–Cys459 and Cys441–Cys476.

The protein belongs to the peptidase C13 family.

Asparagine-specific endopeptidase involved in the processing of vacuolar seed protein precursors into the mature forms. This chain is Vacuolar-processing enzyme, found in Vicia sativa (Spring vetch).